Here is a 64-residue protein sequence, read N- to C-terminus: Conotoxin reg3.16 (64 aa).

The signal sequence occupies residues 1-19; that stretch reads MSKLGVFLTICLLLFPLTA. A propeptide spanning residues 20-49 is cleaved from the precursor; the sequence is LQLDGDQPADKPAQRKLKILPKRKHWTRFT. 3 disulfides stabilise this stretch: Cys-50–Cys-64, Cys-51–Cys-60, and Cys-56–Cys-63.

It belongs to the conotoxin M superfamily. In terms of tissue distribution, expressed by the venom duct.

Its subcellular location is the secreted. In Conus regius (Crown cone), this protein is Conotoxin reg3.16.